The following is a 466-amino-acid chain: Adenylosuccinate lyase (466 aa).

Substrate is bound by residues 21 to 22 (RY), 97 to 99 (NHD), and 130 to 131 (TS). H180 (proton donor/acceptor) is an active-site residue. Residue Q259 participates in substrate binding. Catalysis depends on S307, which acts as the Proton donor/acceptor. 3 residues coordinate substrate: R347, S352, and R356.

Belongs to the lyase 1 family. Adenylosuccinate lyase subfamily. Homotetramer. Residues from neighboring subunits contribute catalytic and substrate-binding residues to each active site.

It catalyses the reaction N(6)-(1,2-dicarboxyethyl)-AMP = fumarate + AMP. It carries out the reaction (2S)-2-[5-amino-1-(5-phospho-beta-D-ribosyl)imidazole-4-carboxamido]succinate = 5-amino-1-(5-phospho-beta-D-ribosyl)imidazole-4-carboxamide + fumarate. It functions in the pathway purine metabolism; AMP biosynthesis via de novo pathway; AMP from IMP: step 2/2. The protein operates within purine metabolism; IMP biosynthesis via de novo pathway; 5-amino-1-(5-phospho-D-ribosyl)imidazole-4-carboxamide from 5-amino-1-(5-phospho-D-ribosyl)imidazole-4-carboxylate: step 2/2. In Dictyostelium discoideum (Social amoeba), this protein is Adenylosuccinate lyase (purB).